A 445-amino-acid polypeptide reads, in one-letter code: Chromosome partition protein MukF (445 aa).

The tract at residues L213–I241 is leucine-zipper.

It belongs to the MukF family. In terms of assembly, interacts, and probably forms a ternary complex, with MukE and MukB via its C-terminal region. The complex formation is stimulated by calcium or magnesium. It is required for an interaction between MukE and MukB.

Its subcellular location is the cytoplasm. The protein resides in the nucleoid. In terms of biological role, involved in chromosome condensation, segregation and cell cycle progression. May participate in facilitating chromosome segregation by condensation DNA from both sides of a centrally located replisome during cell division. Not required for mini-F plasmid partitioning. Probably acts via its interaction with MukB and MukE. Overexpression results in anucleate cells. It has a calcium binding activity. This Vibrio vulnificus (strain YJ016) protein is Chromosome partition protein MukF.